Here is a 952-residue protein sequence, read N- to C-terminus: Hexon protein (952 aa).

At alanine 2 the chain carries N-acetylalanine; by host. Positions 149-161 (EDDDNEDEVDEQA) are enriched in acidic residues. A disordered region spans residues 149 to 172 (EDDDNEDEVDEQAEQQKTHVFGQA). Serine 175 carries the phosphoserine; by host modification. A Phosphotyrosine; by host modification is found at tyrosine 940.

The protein belongs to the adenoviridae hexon protein family. In terms of assembly, homotrimer. Interacts with the capsid vertex protein; this interaction binds the peripentonal hexons to the neighboring penton base. Interacts with the hexon-linking protein; this interaction tethers the hexons surrounding the penton to those situated in the central plate of the facet. Interacts with the hexon-interlacing protein; this interaction lashes the hexons together. Interacts with host dyneins DYNC1LI1 and DYNC1I2; this interaction might be involved in intracellular microtubule-dependent transport of incoming viral capsid. Interacts with the shutoff protein; this interaction allows folding and formation of hexons trimers. Interacts with pre-protein VI; this interaction probably allows nuclear import of hexon trimers and possibly pre-capsid assembly. Interacts with host NUP214 (via N-terminus); this interaction might be essential for the release of the virus genome to the nucleus.

It localises to the virion. It is found in the host nucleus. In terms of biological role, major capsid protein that self-associates to form 240 hexon trimers, each in the shape of a hexagon, building most of the pseudo T=25 capsid. Assembled into trimeric units with the help of the chaperone shutoff protein. Transported by pre-protein VI to the nucleus where it associates with other structural proteins to form an empty capsid. Might be involved, through its interaction with host dyneins, in the intracellular microtubule-dependent transport of incoming viral capsid to the nucleus. The chain is Hexon protein from Homo sapiens (Human).